Reading from the N-terminus, the 282-residue chain is MTNLPKVTVRDLAESGVHFGHKISRWNAKMAPYIYGVHQENRIHIIDLRKTLPLLQVAMKALYDVAFQGGRILFVGTKFQAFDIIASEAIRCGQYYVNHRWLGGMLTNWGTVSSSIKTLMQYEKILNDEDSILTKKELGNIEKKKQKLDKALGGIREMGAIPDILFIIDTNKEHIAVKEAKKLGIPIVAILDTNSDPDGITYLIPGNDDSRKSIELYCKLATDSILAGIESSLAKSGVKIDDIRGDEFIQEKEDGIVQTKRRRSKVYKEEEREVVTNEDESR.

The segment at 260-282 (KRRRSKVYKEEEREVVTNEDESR) is disordered. Basic and acidic residues predominate over residues 266–282 (VYKEEEREVVTNEDESR).

The protein belongs to the universal ribosomal protein uS2 family.

The sequence is that of Small ribosomal subunit protein uS2 from Wolbachia pipientis wMel.